Consider the following 191-residue polypeptide: Large ribosomal subunit protein uL5 (191 aa).

It belongs to the universal ribosomal protein uL5 family. In terms of assembly, part of the 50S ribosomal subunit; part of the 5S rRNA/L5/L18/L25 subcomplex. Contacts the 5S rRNA and the P site tRNA. Forms a bridge to the 30S subunit in the 70S ribosome.

Its function is as follows. This is one of the proteins that bind and probably mediate the attachment of the 5S RNA into the large ribosomal subunit, where it forms part of the central protuberance. In the 70S ribosome it contacts protein S13 of the 30S subunit (bridge B1b), connecting the 2 subunits; this bridge is implicated in subunit movement. Contacts the P site tRNA; the 5S rRNA and some of its associated proteins might help stabilize positioning of ribosome-bound tRNAs. The protein is Large ribosomal subunit protein uL5 of Salinibacter ruber (strain DSM 13855 / M31).